The sequence spans 188 residues: MLENLVESLRNAPVVKKGDYDYFVHGISDGIPALNPCVLKEISEVLAERIDLDKVDKIVGVEAMGIHIATALSLETGLPLLVIRKREYGLEGEHEILKHTGYATSKLYINDLNEGDNIVLVDDVVSTGGTLSVVINELKAIGVNILDTFVVVEKGEGKKIVEDKTGENIVTLVKLDVVDGKVVADSLI.

Belongs to the purine/pyrimidine phosphoribosyltransferase family. Archaeal HPRT subfamily. In terms of assembly, homodimer.

The protein resides in the cytoplasm. It catalyses the reaction IMP + diphosphate = hypoxanthine + 5-phospho-alpha-D-ribose 1-diphosphate. The catalysed reaction is GMP + diphosphate = guanine + 5-phospho-alpha-D-ribose 1-diphosphate. Its pathway is purine metabolism; IMP biosynthesis via salvage pathway; IMP from hypoxanthine: step 1/1. Functionally, catalyzes a salvage reaction resulting in the formation of IMP that is energically less costly than de novo synthesis. The protein is Hypoxanthine/guanine phosphoribosyltransferase of Methanobrevibacter ruminantium (strain ATCC 35063 / DSM 1093 / JCM 13430 / OCM 146 / M1) (Methanobacterium ruminantium).